A 685-amino-acid polypeptide reads, in one-letter code: DNA ligase (685 aa).

NAD(+) is bound by residues 34-38, 83-84, and Glu113; these read DAVFD and SL. The active-site N6-AMP-lysine intermediate is the Lys115. Residues Arg136, Glu173, Lys297, and Lys321 each contribute to the NAD(+) site. Zn(2+)-binding residues include Cys415, Cys418, Cys433, and Cys438. The BRCT domain occupies 607-685; it reads QEKLQFSGKT…EQELMTLISN (79 aa).

It belongs to the NAD-dependent DNA ligase family. LigA subfamily. The cofactor is Mg(2+). Mn(2+) is required as a cofactor.

It carries out the reaction NAD(+) + (deoxyribonucleotide)n-3'-hydroxyl + 5'-phospho-(deoxyribonucleotide)m = (deoxyribonucleotide)n+m + AMP + beta-nicotinamide D-nucleotide.. In terms of biological role, DNA ligase that catalyzes the formation of phosphodiester linkages between 5'-phosphoryl and 3'-hydroxyl groups in double-stranded DNA using NAD as a coenzyme and as the energy source for the reaction. It is essential for DNA replication and repair of damaged DNA. The protein is DNA ligase of Prochlorococcus marinus (strain SARG / CCMP1375 / SS120).